The chain runs to 355 residues: 4-dimethylallyltryptophan N-methyltransferase easF (355 aa).

The protein belongs to the methyltransferase superfamily. In terms of assembly, homodimer.

It catalyses the reaction 4-(3-methylbut-2-enyl)-L-tryptophan + S-adenosyl-L-methionine = 4-(3-methylbut-2-enyl)-L-abrine + S-adenosyl-L-homocysteine + H(+). The protein operates within alkaloid biosynthesis; ergot alkaloid biosynthesis. Functionally, 4-dimethylallyltryptophan N-methyltransferase; part of the gene cluster that mediates the biosynthesis of fungal ergot alkaloid. DmaW catalyzes the first step of ergot alkaloid biosynthesis by condensing dimethylallyl diphosphate (DMAP) and tryptophan to form 4-dimethylallyl-L-tryptophan. The second step is catalyzed by the methyltransferase easF that methylates 4-dimethylallyl-L-tryptophan in the presence of S-adenosyl-L-methionine, resulting in the formation of 4-dimethylallyl-L-abrine. The catalase easC and the FAD-dependent oxidoreductase easE then transform 4-dimethylallyl-L-abrine to chanoclavine-I which is further oxidized by easD in the presence of NAD(+), resulting in the formation of chanoclavine-I aldehyde. Agroclavine dehydrogenase easG then mediates the conversion of chanoclavine-I aldehyde to agroclavine via a non-enzymatic adduct reaction: the substrate is an iminium intermediate that is formed spontaneously from chanoclavine-I aldehyde in the presence of glutathione. Further conversion of agroclavine to paspalic acid is a two-step process involving oxidation of agroclavine to elymoclavine and of elymoclavine to paspalic acid, the second step being performed by the elymoclavine oxidase cloA. However, cloA does not encode a functional enzyme indicating that C.fusiformis terminates its ergot alkaloid pathway at elymoclavine. The protein is 4-dimethylallyltryptophan N-methyltransferase easF of Claviceps fusiformis (Ergot fungus).